Here is a 428-residue protein sequence, read N- to C-terminus: Gamma-glutamyl phosphate reductase (428 aa).

The protein belongs to the gamma-glutamyl phosphate reductase family.

Its subcellular location is the cytoplasm. The catalysed reaction is L-glutamate 5-semialdehyde + phosphate + NADP(+) = L-glutamyl 5-phosphate + NADPH + H(+). Its pathway is amino-acid biosynthesis; L-proline biosynthesis; L-glutamate 5-semialdehyde from L-glutamate: step 2/2. In terms of biological role, catalyzes the NADPH-dependent reduction of L-glutamate 5-phosphate into L-glutamate 5-semialdehyde and phosphate. The product spontaneously undergoes cyclization to form 1-pyrroline-5-carboxylate. This Anaeromyxobacter sp. (strain Fw109-5) protein is Gamma-glutamyl phosphate reductase.